A 413-amino-acid polypeptide reads, in one-letter code: Elongation factor 1-alpha (413 aa).

Residues 5–211 (KEHINLAFIG…DNLAAPEKPV (207 aa)) enclose the tr-type G domain. The interval 14–21 (GHVDHGKS) is G1. 14–21 (GHVDHGKS) lines the GTP pocket. Ser21 contacts Mg(2+). A G2 region spans residues 60–64 (GVTID). Positions 81–84 (DCPG) are G3. GTP-binding positions include 81–85 (DCPGH) and 136–139 (NKID). Positions 136–139 (NKID) are G4. Residues 175–177 (SAF) form a G5 region.

Belongs to the TRAFAC class translation factor GTPase superfamily. Classic translation factor GTPase family. EF-Tu/EF-1A subfamily.

Its subcellular location is the cytoplasm. It carries out the reaction GTP + H2O = GDP + phosphate + H(+). GTP hydrolase that promotes the GTP-dependent binding of aminoacyl-tRNA to the A-site of ribosomes during protein biosynthesis. This chain is Elongation factor 1-alpha, found in Methanobrevibacter smithii (strain ATCC 35061 / DSM 861 / OCM 144 / PS).